Reading from the N-terminus, the 330-residue chain is Lymphocyte-specific protein 1 (330 aa).

Composition is skewed to basic and acidic residues over residues 1 to 20 (MAEA…HAED) and 37 to 62 (AREQ…DGGH). 2 disordered regions span residues 1–246 (MAEA…SIEL) and 281–302 (DMSK…TIKS). Over residues 66–77 (QPGQQTLISLKS) the composition is skewed to polar residues. 2 positions are modified to phosphoserine; by CK2: Ser77 and Ser78. A compositionally biased stretch (basic and acidic residues) spans 113–135 (QSERPEEKQTEESSHQAKVHLEE). At Thr166 the chain carries Phosphothreonine. 4 positions are modified to phosphoserine: Ser168, Ser179, Ser180, and Ser184. Polar residues-rich tracts occupy residues 206–215 (VKKSQPTLPI) and 223–242 (QQYT…SRQP). Ser243 bears the Phosphoserine; by MAPKAPK2 mark. Over residues 291–302 (KGGSKISSTIKS) the composition is skewed to low complexity. An N6-acetyllysine modification is found at Lys318.

Phosphorylated by casein kinase II, protein kinase C and MAPKAPK2. Phosphorylation by PKC induces translocation from membrane to cytoplasm. Phosphorylation by MAPKAPK2 may regulate neutrophil chemotaxis. Isoform 1 is expressed in normal mouse B and T-lymphocytes and in transformed B-cells but not (or in smaller amounts) in nine T-lymphoma lines tested. Isoform 2 is expressed in non-lymphoid cell lines (myocytes, stromal cells, fibroblasts).

It is found in the cell membrane. In terms of biological role, may play a role in mediating neutrophil activation and chemotaxis. The chain is Lymphocyte-specific protein 1 (Lsp1) from Mus musculus (Mouse).